The chain runs to 490 residues: Aspartyl aminopeptidase 4 (490 aa).

Zn(2+) is bound at residue H97. H173 provides a ligand contact to substrate. Zn(2+) is bound by residues D273, E308, E309, and D362. E308 lines the substrate pocket. 4 residues coordinate substrate: D362, H365, K390, and Y397. H456 is a binding site for Zn(2+).

The protein belongs to the peptidase M18 family. Tetrahedron-shaped homododecamer built from six homodimers. Zn(2+) serves as cofactor.

Its subcellular location is the cytoplasm. The protein localises to the vacuole lumen. It catalyses the reaction Release of an N-terminal aspartate or glutamate from a peptide, with a preference for aspartate.. With respect to regulation, the metalloproteases inhibitors EDTA and 1.10-phenanthroline both inhibit the activity, whereas bestatin, an inhibitor of most aminopeptidases, does not affect enzyme activity. Functionally, aspartyl aminopeptidase that contributes to peptide degradation both in the cytosol and the vacuole. Cells may respond to environmental conditions by changing the distributions of the cytosolic enzyme to the vacuole when cells need more active vacuolar degradation. The protein is Aspartyl aminopeptidase 4 (APE4) of Saccharomyces cerevisiae (strain ATCC 204508 / S288c) (Baker's yeast).